We begin with the raw amino-acid sequence, 102 residues long: NADH-quinone oxidoreductase subunit K (102 aa).

Helical transmembrane passes span 6–26, 30–50, and 62–82; these read LEHGLALASVLFALGLVGLMV, ILFVLMSLEVMMNAAALAFVV, and VMFILVLSLAAAEASIGLAIL.

Belongs to the complex I subunit 4L family. NDH-1 is composed of 13 different subunits. Subunits NuoA, H, J, K, L, M, N constitute the membrane sector of the complex.

It localises to the cell inner membrane. The catalysed reaction is a quinone + NADH + 5 H(+)(in) = a quinol + NAD(+) + 4 H(+)(out). NDH-1 shuttles electrons from NADH, via FMN and iron-sulfur (Fe-S) centers, to quinones in the respiratory chain. The immediate electron acceptor for the enzyme in this species is believed to be ubiquinone. Couples the redox reaction to proton translocation (for every two electrons transferred, four hydrogen ions are translocated across the cytoplasmic membrane), and thus conserves the redox energy in a proton gradient. This chain is NADH-quinone oxidoreductase subunit K, found in Pseudomonas aeruginosa (strain LESB58).